We begin with the raw amino-acid sequence, 370 residues long: GTPase Obg (370 aa).

Positions 1-159 (MKFIDEARIE…RKLKLELKVL (159 aa)) constitute an Obg domain. The segment at 129–148 (HFKSSTNRAPRQKTNGKSGE) is disordered. The segment covering 130-145 (FKSSTNRAPRQKTNGK) has biased composition (polar residues). The 175-residue stretch at 160–334 (ADVGLLGMPN…LCYSLQDYLD (175 aa)) folds into the OBG-type G domain. Residues 166-173 (GMPNAGKS), 191-195 (FTTLH), 213-216 (DIPG), 284-287 (NKVD), and 315-317 (SAL) contribute to the GTP site. Mg(2+)-binding residues include Ser-173 and Thr-193.

The protein belongs to the TRAFAC class OBG-HflX-like GTPase superfamily. OBG GTPase family. In terms of assembly, monomer. Mg(2+) serves as cofactor.

The protein localises to the cytoplasm. Functionally, an essential GTPase which binds GTP, GDP and possibly (p)ppGpp with moderate affinity, with high nucleotide exchange rates and a fairly low GTP hydrolysis rate. Plays a role in control of the cell cycle, stress response, ribosome biogenesis and in those bacteria that undergo differentiation, in morphogenesis control. This is GTPase Obg from Polynucleobacter necessarius subsp. necessarius (strain STIR1).